The chain runs to 740 residues: Elongation factor 2 (740 aa).

The 242-residue stretch at 23-264 (AQIRNAGTLA…MIIEHVPPPN (242 aa)) folds into the tr-type G domain. GTP is bound by residues 32–39 (AHVDHGKT), 98–102 (DTPGH), and 152–155 (NKID). His-605 is modified (diphthamide).

Belongs to the TRAFAC class translation factor GTPase superfamily. Classic translation factor GTPase family. EF-G/EF-2 subfamily.

It localises to the cytoplasm. Catalyzes the GTP-dependent ribosomal translocation step during translation elongation. During this step, the ribosome changes from the pre-translocational (PRE) to the post-translocational (POST) state as the newly formed A-site-bound peptidyl-tRNA and P-site-bound deacylated tRNA move to the P and E sites, respectively. Catalyzes the coordinated movement of the two tRNA molecules, the mRNA and conformational changes in the ribosome. The sequence is that of Elongation factor 2 from Pyrobaculum islandicum (strain DSM 4184 / JCM 9189 / GEO3).